A 162-amino-acid polypeptide reads, in one-letter code: MSDTFLEIAYERARQAQQRQMKRRRAAAHRAARGPAPARAPRASPTQRTGTAHEDQALRLLAGAGLVPLARNLHCRAGEIDLVMRDGATLVLVEVRARANPRYGGAAASVGRAKRARLLRCAALLLPDLARRHWGGRIPPVRFDVVAFEAGRADWLPAAFTL.

A disordered region spans residues 15–52 (QAQQRQMKRRRAAAHRAARGPAPARAPRASPTQRTGTA). A compositionally biased stretch (basic residues) spans 20–32 (QMKRRRAAAHRAA). The segment covering 33–48 (RGPAPARAPRASPTQR) has biased composition (low complexity).

Belongs to the UPF0102 family.

The polypeptide is UPF0102 protein Bpet0439 (Bordetella petrii (strain ATCC BAA-461 / DSM 12804 / CCUG 43448)).